We begin with the raw amino-acid sequence, 1364 residues long: RecQ-like DNA helicase BLM (1364 aa).

Disordered stretches follow at residues 108 to 131 (VHGN…TGIN) and 147 to 174 (DDFD…KNTS). The necessary for dimerization and homooligomerization stretch occupies residues 328-377 (DSKVPSQLLTLMLEICDLVDKIPISELHVLSCGLDLKKKRDMRKRLLSND). 3 disordered regions span residues 380-416 (FRSS…ESLS), 484-515 (RFNT…NPDL), and 535-580 (SPAA…SLLS). Over residues 387-399 (SSTVSLTSCTSST) the composition is skewed to low complexity. Residues 484–503 (RFNTPQNEKPISSSTCTRPY) are compositionally biased toward polar residues. The segment covering 555 to 566 (AQLDSRNKEKNT) has biased composition (basic and acidic residues). The span at 567-580 (RNNTGDTTNPSLLS) shows a compositional bias: polar residues. Residues 620–624 (FRTNQ) and 644–648 (GGGKS) each bind ATP. Residues 628-803 (INACLCGEDC…LNQLKMTKPQ (176 aa)) form the Helicase ATP-binding domain. A DEAH box motif is present at residues 747 to 750 (DEAH). 3' overhang DNA-binding regions lie at residues 822–825 (KPKR) and 849–851 (SRH). In terms of domain architecture, Helicase C-terminal spans 829–976 (DCVEWIKKHH…TKQTHFNNLY (148 aa)). Position 934 (arginine 934) interacts with ATP. Residues 952 to 955 (RIRR) are 3' overhang DNA-binding. Residues cysteine 988, cysteine 1007, cysteine 1015, and cysteine 1018 each coordinate Zn(2+). A DNA Holliday junction binding region spans residues 1046 to 1090 (LVQGRGKGRSNNTRLTLNMMVDIFLGSKSAKIQTGLFGKGAAYSR). 3 3' overhang DNA-binding regions span residues 1061–1063 (TLN), 1072–1076 (SKSAK), and 1111–1117 (YITFNDQ). Positions 1164–1244 (EEMVKKCQAE…QKYSEWTLPV (81 aa)) constitute an HRDC domain. The interval 1179-1196 (KRLGKIFGVHYFNIFNTA) is necessary for ssDNA and DNA Holliday junction binding. Asparagine 1194 serves as a coordination point for ATP. The tract at residues 1251–1364 (SGGPANVSAR…RFLKPSYSMF (114 aa)) is disordered. Residues 1273–1282 (KSSYFSSNNK) are compositionally biased toward polar residues. Over residues 1283–1300 (KGPKRKNSSYFGKSKKRK) the composition is skewed to basic residues. Positions 1285-1301 (PKRKNSSYFGKSKKRKT) match the Nuclear localization signal motif. The segment covering 1306-1335 (QQSRSKNGNSSYARKNSTAKTSSSYISGSK) has biased composition (polar residues).

It belongs to the helicase family. RecQ subfamily. In terms of assembly, monomer. Homodimer (via N-terminus). Homotetramer (via N-terminus); dimer of dimers. Homohexamer (via N-terminus). Self-association negatively regulates DNA unwinding amplitude and rate. Oligomer complexes dissociate into monomer in presence of ATP. Zn(2+) serves as cofactor.

Its subcellular location is the nucleus. It catalyses the reaction Couples ATP hydrolysis with the unwinding of duplex DNA by translocating in the 3'-5' direction.. The enzyme catalyses ATP + H2O = ADP + phosphate + H(+). In terms of biological role, ATP-dependent DNA helicase that unwinds single- and double-stranded DNA in a 3'-5' direction. Participates in DNA replication and repair. Involved in 5'-end resection of DNA during double-strand break (DSB) repair. Negatively regulates sister chromatid exchange (SCE). Stimulates DNA 4-way junction branch migration and DNA Holliday junction dissolution. Binds single-stranded DNA (ssDNA), forked duplex DNA and DNA Holliday junction. This chain is RecQ-like DNA helicase BLM (blm), found in Xenopus laevis (African clawed frog).